The chain runs to 1024 residues: Beta-galactosidase (1024 aa).

Substrate contacts are provided by Asn-103 and Asp-202. Asp-202 provides a ligand contact to Na(+). Residues Glu-417, His-419, and Glu-462 each coordinate Mg(2+). Substrate-binding positions include Glu-462 and 538 to 541 (EYAH). Glu-462 (proton donor) is an active-site residue. Glu-538 serves as the catalytic Nucleophile. Asn-598 serves as a coordination point for Mg(2+). Phe-602 and Asn-605 together coordinate Na(+). Substrate contacts are provided by Asn-605 and Trp-1000.

This sequence belongs to the glycosyl hydrolase 2 family. Homotetramer. Mg(2+) is required as a cofactor. Na(+) serves as cofactor.

It catalyses the reaction Hydrolysis of terminal non-reducing beta-D-galactose residues in beta-D-galactosides.. The protein is Beta-galactosidase of Klebsiella pneumoniae.